The following is a 581-amino-acid chain: Cytosolic Fe-S cluster assembly factor nar-1 (581 aa).

The [4Fe-4S] cluster site is built by Cys-20, Cys-68, Cys-71, Cys-74, Cys-215, Cys-270, Cys-457, and Cys-461.

It belongs to the NARF family.

Functionally, component of the cytosolic Fe/S protein assembly machinery. Required for maturation of extramitochondrial Fe/S proteins. May play a role in the transfer of pre-assembled Fe/S clusters to target apoproteins. The polypeptide is Cytosolic Fe-S cluster assembly factor nar-1 (nar-1) (Neurospora crassa (strain ATCC 24698 / 74-OR23-1A / CBS 708.71 / DSM 1257 / FGSC 987)).